The following is a 234-amino-acid chain: Segregation and condensation protein A (234 aa).

The protein belongs to the ScpA family. As to quaternary structure, component of a cohesin-like complex composed of ScpA, ScpB and the Smc homodimer, in which ScpA and ScpB bind to the head domain of Smc. The presence of the three proteins is required for the association of the complex with DNA.

Its subcellular location is the cytoplasm. Its function is as follows. Participates in chromosomal partition during cell division. May act via the formation of a condensin-like complex containing Smc and ScpB that pull DNA away from mid-cell into both cell halves. This chain is Segregation and condensation protein A, found in Streptococcus pyogenes serotype M12 (strain MGAS2096).